A 146-amino-acid polypeptide reads, in one-letter code: Probable cyclic pyranopterin monophosphate synthase (146 aa).

Substrate contacts are provided by residues 66–68 and 102–103; these read LTH and ME. Residue D117 is part of the active site.

This sequence belongs to the MoaC family. As to quaternary structure, homohexamer; trimer of dimers.

It catalyses the reaction (8S)-3',8-cyclo-7,8-dihydroguanosine 5'-triphosphate = cyclic pyranopterin phosphate + diphosphate. The protein operates within cofactor biosynthesis; molybdopterin biosynthesis. In terms of biological role, catalyzes the conversion of (8S)-3',8-cyclo-7,8-dihydroguanosine 5'-triphosphate to cyclic pyranopterin monophosphate (cPMP). In Aeropyrum pernix (strain ATCC 700893 / DSM 11879 / JCM 9820 / NBRC 100138 / K1), this protein is Probable cyclic pyranopterin monophosphate synthase.